The following is a 246-amino-acid chain: uncharacterized protein (246 aa).

This is an uncharacterized protein from Acanthamoeba polyphaga (Amoeba).